The sequence spans 260 residues: NH(3)-dependent NAD(+) synthetase (260 aa).

Gly31–Ser38 is an ATP binding site. Asp37 is a binding site for Mg(2+). Arg112 serves as a coordination point for deamido-NAD(+). Residue Thr132 coordinates ATP. Glu137 lines the Mg(2+) pocket. 2 residues coordinate ATP: Lys161 and Ser183.

This sequence belongs to the NAD synthetase family. As to quaternary structure, homodimer.

It catalyses the reaction deamido-NAD(+) + NH4(+) + ATP = AMP + diphosphate + NAD(+) + H(+). The protein operates within cofactor biosynthesis; NAD(+) biosynthesis; NAD(+) from deamido-NAD(+) (ammonia route): step 1/1. In terms of biological role, catalyzes the ATP-dependent amidation of deamido-NAD to form NAD. Uses ammonia as a nitrogen source. The sequence is that of NH(3)-dependent NAD(+) synthetase from Helicobacter pylori (strain G27).